The primary structure comprises 134 residues: Profilin-2 (134 aa).

Cys-13 and Cys-118 are joined by a disulfide. The Involved in PIP2 interaction motif lies at Ala-84 to Thr-100. The residue at position 114 (Thr-114) is a Phosphothreonine.

The protein belongs to the profilin family. In terms of assembly, occurs in many kinds of cells as a complex with monomeric actin in a 1:1 ratio. Phosphorylated by MAP kinases.

The protein resides in the cytoplasm. The protein localises to the cytoskeleton. Binds to actin and affects the structure of the cytoskeleton. At high concentrations, profilin prevents the polymerization of actin, whereas it enhances it at low concentrations. This is Profilin-2 from Olea europaea (Common olive).